The primary structure comprises 392 residues: Alanine--glyoxylate aminotransferase (392 aa).

Lys209 is subject to N6-(pyridoxal phosphate)lysine. The residue at position 225 (Lys225) is an N6-acetyllysine; alternate. The residue at position 225 (Lys225) is an N6-succinyllysine; alternate. An N6-acetyllysine mark is found at Lys234 and Lys312. Arg360 contacts substrate. Residues Lys390–Leu392 carry the Microbody targeting signal motif.

This sequence belongs to the class-V pyridoxal-phosphate-dependent aminotransferase family. In terms of assembly, homodimer. Pyridoxal 5'-phosphate is required as a cofactor.

The protein localises to the peroxisome. The catalysed reaction is L-serine + pyruvate = 3-hydroxypyruvate + L-alanine. The enzyme catalyses glyoxylate + L-alanine = glycine + pyruvate. In terms of biological role, peroxisomal aminotransferase that catalyzes the transamination of glyoxylate to glycine and contributes to the glyoxylate detoxification. Also catalyzes the transamination between L-serine and pyruvate and contributes to gluconeogenesis from the L-serine metabolism. The sequence is that of Alanine--glyoxylate aminotransferase from Pongo abelii (Sumatran orangutan).